The chain runs to 535 residues: Dual specificity calcium/calmodulin-dependent 3',5'-cyclic nucleotide phosphodiesterase 1B (535 aa).

The interval Met-1–Glu-21 is disordered. Ser-7 and Ser-14 each carry phosphoserine. 2 calmodulin-binding regions span residues Ser-27–Asn-47 and Glu-117–Arg-140. Residues Val-145–Gly-502 enclose the PDEase domain. The active-site Proton donor is the His-222. Positions 226, 262, 263, and 369 each coordinate Zn(2+). Asp-263 contacts Mg(2+). Disordered stretches follow at residues Gln-444 to Asn-474 and Trp-495 to Asp-535. A compositionally biased stretch (polar residues) spans Lys-454–Gln-463. Phosphoserine is present on residues Ser-465 and Ser-513.

This sequence belongs to the cyclic nucleotide phosphodiesterase family. PDE1 subfamily. As to quaternary structure, homodimer. Zn(2+) serves as cofactor. Requires Mg(2+) as cofactor.

It localises to the cytoplasm. The protein resides in the cytosol. The catalysed reaction is a nucleoside 3',5'-cyclic phosphate + H2O = a nucleoside 5'-phosphate + H(+). It catalyses the reaction 3',5'-cyclic GMP + H2O = GMP + H(+). It carries out the reaction 3',5'-cyclic AMP + H2O = AMP + H(+). Type I PDE are activated by the binding of calmodulin in the presence of Ca(2+). Functionally, cyclic nucleotide phosphodiesterase with a dual specificity for the second messengers cAMP and cGMP, which are key regulators of many important physiological processes. Has a preference for cGMP as a substrate. This is Dual specificity calcium/calmodulin-dependent 3',5'-cyclic nucleotide phosphodiesterase 1B from Mus musculus (Mouse).